The following is a 158-amino-acid chain: Small ribosomal subunit protein uS15 (158 aa).

Basic residues predominate over residues 1–18 (MARMHARKRGKSGSKRPP). Residues 1–21 (MARMHARKRGKSGSKRPPRTA) are disordered.

Belongs to the universal ribosomal protein uS15 family. Part of the 30S ribosomal subunit.

The sequence is that of Small ribosomal subunit protein uS15 from Pyrococcus abyssi (strain GE5 / Orsay).